The primary structure comprises 318 residues: Cell growth regulator with EF hand domain protein 1 (318 aa).

The signal sequence occupies residues 1–19; sequence MLPLTMTVLILLLLPTGQA. EF-hand domains are found at residues 69–104 and 114–149; these read SREQVLLYLFALHDYDQSGQLDGLELLSMLTAALAP and PVILIVDKVLETQDLNGDGLMTPAELINFPGVALRH. 9 residues coordinate Ca(2+): Asp82, Asp84, Ser86, Gln88, Glu93, Asp127, Asn129, Asp131, and Glu138. Residues 177–318 are disordered; sequence LRQETQEAPG…HIVQVENDEI (142 aa). Composition is skewed to basic and acidic residues over residues 186 to 202 and 223 to 233; these read GPREEAKGQVEARRESL and GEAEGQAEAKG. Repeat copies occupy residues 219 to 235, 236 to 252, and 253 to 269. Positions 219–286 are 4 X 17 AA approximate tandem repeats of P-G-P-R-G-E-A-G-G-Q-A-E-A-[KR]-G-D-A; that stretch reads PGPRGEAEGQ…GGQAEARENG (68 aa). The segment covering 235–272 has biased composition (low complexity); it reads APGPRGEAGGQAEAEGDAPGPRGEAGGQAEAEGDAPGP. The stretch at 270 to 286 is one 4; approximate repeat; the sequence is PGPRGEAGGQAEARENG. Residues 281–293 are compositionally biased toward basic and acidic residues; that stretch reads EARENGEEAKELP.

In terms of processing, probably digested extracellularly by an unknown serine protease generating extremely hydrophobic bioactive peptides.

The protein localises to the secreted. Functionally, mediates cell-cell adhesion in a calcium-dependent manner. Able to inhibit growth in several cell lines. The protein is Cell growth regulator with EF hand domain protein 1 of Homo sapiens (Human).